A 350-amino-acid polypeptide reads, in one-letter code: Phosphoribosylformylglycinamidine cyclo-ligase (350 aa).

This sequence belongs to the AIR synthase family.

Its subcellular location is the cytoplasm. The catalysed reaction is 2-formamido-N(1)-(5-O-phospho-beta-D-ribosyl)acetamidine + ATP = 5-amino-1-(5-phospho-beta-D-ribosyl)imidazole + ADP + phosphate + H(+). The protein operates within purine metabolism; IMP biosynthesis via de novo pathway; 5-amino-1-(5-phospho-D-ribosyl)imidazole from N(2)-formyl-N(1)-(5-phospho-D-ribosyl)glycinamide: step 2/2. The sequence is that of Phosphoribosylformylglycinamidine cyclo-ligase from Cupriavidus necator (strain ATCC 17699 / DSM 428 / KCTC 22496 / NCIMB 10442 / H16 / Stanier 337) (Ralstonia eutropha).